The following is a 315-amino-acid chain: tRNA-cytidine(32) 2-sulfurtransferase (315 aa).

Residues 39-44 (SGGKDS) carry the PP-loop motif motif. Residues Cys-114, Cys-117, and Cys-205 each coordinate [4Fe-4S] cluster.

This sequence belongs to the TtcA family. In terms of assembly, homodimer. It depends on Mg(2+) as a cofactor. [4Fe-4S] cluster is required as a cofactor.

It is found in the cytoplasm. The catalysed reaction is cytidine(32) in tRNA + S-sulfanyl-L-cysteinyl-[cysteine desulfurase] + AH2 + ATP = 2-thiocytidine(32) in tRNA + L-cysteinyl-[cysteine desulfurase] + A + AMP + diphosphate + H(+). It functions in the pathway tRNA modification. Functionally, catalyzes the ATP-dependent 2-thiolation of cytidine in position 32 of tRNA, to form 2-thiocytidine (s(2)C32). The sulfur atoms are provided by the cysteine/cysteine desulfurase (IscS) system. The chain is tRNA-cytidine(32) 2-sulfurtransferase from Ralstonia pickettii (strain 12J).